A 130-amino-acid polypeptide reads, in one-letter code: Cuticle protein 14 isoform b (130 aa).

The Chitin-binding type R&amp;R domain maps to 24–90; sequence IGNYNFGYNE…NVHTNEPGTD (67 aa).

This is Cuticle protein 14 isoform b from Limulus polyphemus (Atlantic horseshoe crab).